Here is a 245-residue protein sequence, read N- to C-terminus: MPYRKYREKKYETKYREAFKLFQEKIGITFTDEKLLIQAFTHSSYVNEHRKKPHEDNERLEFLGDAVLELTVSQYLFQKYPTMSEGELTKLRAAIVCEPSLVRFANELSFGSLVLLGKGEEMTGGRERPALLADVFEAFIGALYLDQGLETVWGFLKEIVYPKINEGAFSHVMDYKSQLQELIQRDGSGNIEYQILQEKGPAHNREFVSRVTLNNVALGLGSGKSKKEAEQQAAAEALKKLKEQL.

The region spanning phenylalanine 19 to glycine 148 is the RNase III domain. Glutamate 61 serves as a coordination point for Mg(2+). Aspartate 65 is an active-site residue. The Mg(2+) site is built by aspartate 134 and glutamate 137. Residue glutamate 137 is part of the active site. Residues aspartate 174–glutamate 243 form the DRBM domain.

Belongs to the ribonuclease III family. In terms of assembly, homodimer. The cofactor is Mg(2+).

The protein localises to the cytoplasm. The enzyme catalyses Endonucleolytic cleavage to 5'-phosphomonoester.. In terms of biological role, digests double-stranded RNA. Involved in the processing of primary rRNA transcript to yield the immediate precursors to the large and small rRNAs (23S and 16S). Processes some mRNAs, and tRNAs when they are encoded in the rRNA operon. Processes pre-crRNA and tracrRNA of type II CRISPR loci if present in the organism. The sequence is that of Ribonuclease 3 from Bacillus cereus (strain 03BB102).